A 506-amino-acid chain; its full sequence is Zinc finger and SCAN domain containing protein 4F (506 aa).

A disordered region spans residues 1–24 (MASQQAPAKDLQTNNLEFTPTDSS). One can recognise an SCAN box domain in the interval 37–119 (SAQLNFSPSN…RFMESLTDEC (83 aa)). C2H2-type zinc fingers lie at residues 395–417 (YKCE…QRTH), 424–446 (LLCV…EIIH), 452–474 (FKCS…EMIH), and 480–503 (YVCS…RNYH).

As to expression, up-regulated in blastocyst outgrowths and is detectable in a mosaic fashion in ES cultures.

It is found in the nucleus. The protein resides in the chromosome. It localises to the telomere. Functionally, transcription factor required to regulate early development. Binds telomeres and plays a key role in genomic stability by regulating telomere elongation. Acts as an activator of spontaneous telomere sister chromatid exchange (T-SCE) and telomere elongation. The protein is Zinc finger and SCAN domain containing protein 4F (Zscan4f) of Mus musculus (Mouse).